The sequence spans 307 residues: Ribosomal RNA small subunit methyltransferase A (307 aa).

Residues asparagine 35, valine 37, glycine 62, glutamate 83, aspartate 113, and asparagine 136 each coordinate S-adenosyl-L-methionine.

The protein belongs to the class I-like SAM-binding methyltransferase superfamily. rRNA adenine N(6)-methyltransferase family. RsmA subfamily.

Its subcellular location is the cytoplasm. It catalyses the reaction adenosine(1518)/adenosine(1519) in 16S rRNA + 4 S-adenosyl-L-methionine = N(6)-dimethyladenosine(1518)/N(6)-dimethyladenosine(1519) in 16S rRNA + 4 S-adenosyl-L-homocysteine + 4 H(+). Its function is as follows. Specifically dimethylates two adjacent adenosines (A1518 and A1519) in the loop of a conserved hairpin near the 3'-end of 16S rRNA in the 30S particle. May play a critical role in biogenesis of 30S subunits. The chain is Ribosomal RNA small subunit methyltransferase A from Bifidobacterium longum (strain DJO10A).